A 423-amino-acid polypeptide reads, in one-letter code: Replication factor C large subunit (423 aa).

50–57 lines the ATP pocket; it reads GPAGCGKT.

It belongs to the activator 1 small subunits family. RfcL subfamily. As to quaternary structure, heteromultimer composed of small subunits (RfcS) and large subunits (RfcL).

Its function is as follows. Part of the RFC clamp loader complex which loads the PCNA sliding clamp onto DNA. The chain is Replication factor C large subunit from Staphylothermus marinus (strain ATCC 43588 / DSM 3639 / JCM 9404 / F1).